Consider the following 290-residue polypeptide: Nucleotide-binding protein Xfasm12_0753 (290 aa).

An ATP-binding site is contributed by 13-20; that stretch reads GLSGSGKS. 65–68 is a GTP binding site; it reads DIRS.

This sequence belongs to the RapZ-like family.

Displays ATPase and GTPase activities. This is Nucleotide-binding protein Xfasm12_0753 from Xylella fastidiosa (strain M12).